A 119-amino-acid chain; its full sequence is uncharacterized protein (119 aa).

This is an uncharacterized protein from Homo sapiens (Human).